A 366-amino-acid chain; its full sequence is Sulfate/thiosulfate import ATP-binding protein CysA 2 (366 aa).

The ABC transporter domain maps to 14–243 (LSVHALCRRF…PASRFVAEFV (230 aa)). 46–53 (GPSGCGKT) is a binding site for ATP.

The protein belongs to the ABC transporter superfamily. Sulfate/tungstate importer (TC 3.A.1.6) family. The complex is composed of two ATP-binding proteins (CysA), two transmembrane proteins (CysT and CysW) and a solute-binding protein (CysP).

It is found in the cell inner membrane. The catalysed reaction is sulfate(out) + ATP + H2O = sulfate(in) + ADP + phosphate + H(+). It carries out the reaction thiosulfate(out) + ATP + H2O = thiosulfate(in) + ADP + phosphate + H(+). Its function is as follows. Part of the ABC transporter complex CysAWTP involved in sulfate/thiosulfate import. Responsible for energy coupling to the transport system. This Chromobacterium violaceum (strain ATCC 12472 / DSM 30191 / JCM 1249 / CCUG 213 / NBRC 12614 / NCIMB 9131 / NCTC 9757 / MK) protein is Sulfate/thiosulfate import ATP-binding protein CysA 2.